The following is a 150-amino-acid chain: Large ribosomal subunit protein bL9 (150 aa).

Belongs to the bacterial ribosomal protein bL9 family.

Its function is as follows. Binds to the 23S rRNA. The polypeptide is Large ribosomal subunit protein bL9 (Corynebacterium efficiens (strain DSM 44549 / YS-314 / AJ 12310 / JCM 11189 / NBRC 100395)).